Consider the following 320-residue polypeptide: Olfactory receptor 2W1 (320 aa).

The Extracellular segment spans residues 1–25 (MDQSNYSSLHGFILLGFSNHPKMEM). Residue Asn5 is glycosylated (N-linked (GlcNAc...) asparagine). Residues 26 to 49 (ILSGVVAIFYLITLVGNTAIILAS) form a helical membrane-spanning segment. Topologically, residues 50–57 (LLDSQLHT) are cytoplasmic. A helical transmembrane segment spans residues 58–79 (PMYFFLRNLSFLDLCFTTSIIP). Residues 80–100 (QMLVNLWGPDKTISYVGCIIQ) lie on the Extracellular side of the membrane. An intrachain disulfide couples Cys97 to Cys189. The chain crosses the membrane as a helical span at residues 101–120 (LYVYMWLGSVECLLLAVMSY). At 121–139 (DRFTAICKPLHYFVVMNPH) the chain is on the cytoplasmic side. A helical transmembrane segment spans residues 140-158 (LCLKMIIMIWSISLANSVV). Topologically, residues 159–195 (LCTLTLNLPTCGNNILDHFLCELPALVKIACVDTTTV) are extracellular. The chain crosses the membrane as a helical span at residues 196–219 (EMSVFALGIIIVLTPLILILISYG). Residues 220 to 236 (YIAKAVLRTKSKASQRK) are Cytoplasmic-facing. A helical transmembrane segment spans residues 237–259 (AMNTCGSHLTVVSMFYGTIIYMY). Topologically, residues 260 to 272 (LQPGNRASKDQGK) are extracellular. Residues 273–292 (FLTLFYTVITPSLNPLIYTL) form a helical membrane-spanning segment. The Cytoplasmic segment spans residues 293–320 (RNKDMKDALKKLMRFHHKSTKIKRNCKS).

It belongs to the G-protein coupled receptor 1 family.

The protein resides in the cell membrane. In terms of biological role, odorant receptor. This chain is Olfactory receptor 2W1 (OR2W1), found in Homo sapiens (Human).